Here is a 436-residue protein sequence, read N- to C-terminus: 3-ketoacyl-CoA thiolase (436 aa).

The Acyl-thioester intermediate role is filled by Cys99. Catalysis depends on proton acceptor residues His392 and Cys422.

It belongs to the thiolase-like superfamily. Thiolase family. Heterotetramer of two alpha chains (FadJ) and two beta chains (FadI).

The protein localises to the cytoplasm. It catalyses the reaction an acyl-CoA + acetyl-CoA = a 3-oxoacyl-CoA + CoA. It participates in lipid metabolism; fatty acid beta-oxidation. Functionally, catalyzes the final step of fatty acid oxidation in which acetyl-CoA is released and the CoA ester of a fatty acid two carbons shorter is formed. The polypeptide is 3-ketoacyl-CoA thiolase (Shigella dysenteriae serotype 1 (strain Sd197)).